A 239-amino-acid polypeptide reads, in one-letter code: Vesicle-associated protein 1-3 (239 aa).

At M1 the chain carries N-acetylmethionine. Position 2 is an N-acetylthreonine; in Vesicle-associated protein 1-3, N-terminally processed (T2). At 2-215 (TTGDLVNIHP…RKETSKKQSG (214 aa)) the chain is on the cytoplasmic side. The 122-residue stretch at 6–127 (LVNIHPTELK…EDFKLRVVYI (122 aa)) folds into the MSP domain. 2 positions are modified to phosphoserine: S133 and S164. Residues 179-214 (SMISKLTEEKTSATQQSQKLRLELEMLRKETSKKQS) adopt a coiled-coil conformation. The helical; Anchor for type IV membrane protein transmembrane segment at 216 to 236 (GHSLLLMLLVGLLGCVIGYLL) threads the bilayer.

This sequence belongs to the VAMP-associated protein (VAP) (TC 9.B.17) family.

The protein resides in the endoplasmic reticulum membrane. May play a role in vesicle trafficking. This Arabidopsis thaliana (Mouse-ear cress) protein is Vesicle-associated protein 1-3 (PVA13).